Reading from the N-terminus, the 892-residue chain is Translation initiation factor IF-2 (892 aa).

A compositionally biased stretch (basic and acidic residues) spans Gln138–Val185. Disordered regions lie at residues Gln138–Ser250 and Ala262–His298. A compositionally biased stretch (low complexity) spans Leu207–Pro219. Residues Pro391 to Lys560 form the tr-type G domain. Residues Gly400–Thr407, Asp446–His450, and Ser500–Asp503 contribute to the GTP site.

Belongs to the TRAFAC class translation factor GTPase superfamily. Classic translation factor GTPase family. IF-2 subfamily.

The protein resides in the cytoplasm. Functionally, one of the essential components for the initiation of protein synthesis. Protects formylmethionyl-tRNA from spontaneous hydrolysis and promotes its binding to the 30S ribosomal subunits. Also involved in the hydrolysis of GTP during the formation of the 70S ribosomal complex. The chain is Translation initiation factor IF-2 from Xylella fastidiosa (strain Temecula1 / ATCC 700964).